The following is a 79-amino-acid chain: Acyl carrier protein (79 aa).

A Carrier domain is found at 4-79 (AEIKDKVYDI…QAIDYIVNKK (76 aa)). Position 39 is an O-(pantetheine 4'-phosphoryl)serine (Ser-39).

Belongs to the acyl carrier protein (ACP) family. Post-translationally, 4'-phosphopantetheine is transferred from CoA to a specific serine of apo-ACP by AcpS. This modification is essential for activity because fatty acids are bound in thioester linkage to the sulfhydryl of the prosthetic group.

Its subcellular location is the cytoplasm. It participates in lipid metabolism; fatty acid biosynthesis. Functionally, carrier of the growing fatty acid chain in fatty acid biosynthesis. In Pelodictyon phaeoclathratiforme (strain DSM 5477 / BU-1), this protein is Acyl carrier protein.